Reading from the N-terminus, the 514-residue chain is DNA damage-binding protein CMR1 (514 aa).

The tract at residues 26–116 (NLDSLSQSIK…VKQEEKEELS (91 aa)) is disordered. Basic and acidic residues predominate over residues 34 to 44 (IKRELPRASET). Residues 45–55 (KKRKTTPRTKA) show a composition bias toward basic residues. 2 stretches are compositionally biased toward basic and acidic residues: residues 56 to 65 (VKKEDVEPSR) and 92 to 116 (KFEDKVIKSDSTEPEVKQEEKEELS). 7 WD repeats span residues 180 to 221 (ISHT…DDSE), 229 to 269 (PHGK…STEV), 280 to 320 (DYAL…KPLK), 327 to 367 (LHDK…KANA), 385 to 423 (SSRLSVSCVDWNSENRLVCNGYDDYINIFDLNEESLIPD), 438 to 481 (GRWV…IAHL), and 483 to 514 (DSVGAVPAVCGFHPTKNWVVGGSASGKVYLFE).

Belongs to the WD repeat DDB2/WDR76 family.

Its function is as follows. DNA-binding protein that binds to both single- and double-stranded DNA. Binds preferentially to UV-damaged DNA. May be involved in DNA-metabolic processes. The sequence is that of DNA damage-binding protein CMR1 (PRW1) from Scheffersomyces stipitis (strain ATCC 58785 / CBS 6054 / NBRC 10063 / NRRL Y-11545) (Yeast).